A 154-amino-acid polypeptide reads, in one-letter code: Keratin-associated protein 9-9 (154 aa).

14 tandem repeats follow at residues Cys8–Thr12, Cys13–Thr17, Cys18–Thr22, Cys37–Ser41, Cys42–Ser46, Cys51–Ala55, Cys56–Thr60, Cys61–Thr65, Cys66–Thr70, Cys75–Thr79, Cys124–Ala128, Cys129–Thr133, Cys134–Thr137, and Cys148–Ser152. Residues Cys8–Ser152 are 14 X 5 AA repeats of C-C-[RQVGE]-[SPSTNQ]-[TASL].

It belongs to the KRTAP type 9 family. In terms of assembly, interacts with hair keratins.

Functionally, in the hair cortex, hair keratin intermediate filaments are embedded in an interfilamentous matrix, consisting of hair keratin-associated proteins (KRTAP), which are essential for the formation of a rigid and resistant hair shaft through their extensive disulfide bond cross-linking with abundant cysteine residues of hair keratins. The matrix proteins include the high-sulfur and high-glycine-tyrosine keratins. The protein is Keratin-associated protein 9-9 (KRTAP9-9) of Homo sapiens (Human).